The following is a 295-amino-acid chain: Dual specificity protein phosphatase 15 (295 aa).

The 141-residue stretch at 1–141 folds into the Tyrosine-protein phosphatase domain; that stretch reads MTEGVLPGLY…LEEFGWASSQ (141 aa). Thr-2 carries N-myristoyl glycine lipidation. The active-site Phosphocysteine intermediate is the Cys-85. The segment covering 251-270 has biased composition (polar residues); the sequence is SSSCTLSASTERPDGSSTPG. A disordered region spans residues 251–272; the sequence is SSSCTLSASTERPDGSSTPGNP.

Belongs to the protein-tyrosine phosphatase family. Non-receptor class dual specificity subfamily. As to expression, highly expressed in testis. Expressed in brain; up-regulated in patients with multiple sclerosis gray matter lesions.

The protein resides in the cytoplasm. It is found in the cell membrane. The catalysed reaction is O-phospho-L-tyrosyl-[protein] + H2O = L-tyrosyl-[protein] + phosphate. The enzyme catalyses O-phospho-L-seryl-[protein] + H2O = L-seryl-[protein] + phosphate. It carries out the reaction O-phospho-L-threonyl-[protein] + H2O = L-threonyl-[protein] + phosphate. Functionally, may dephosphorylate MAPK13, ATF2, ERBB3, PDGFRB and SNX6. May play a role in the regulation of oligodendrocyte differentiation. May play a role in the regulation of myelin formation. Involved in the regulation of Erk1/2 phosphorylation in Schwann cells; the signaling may be linked to the regulation of myelination. The sequence is that of Dual specificity protein phosphatase 15 from Homo sapiens (Human).